The sequence spans 508 residues: Probable polyol transporter 3 (508 aa).

12 helical membrane passes run 21–41, 60–80, 90–110, 120–140, 147–167, 178–198, 280–300, 318–338, 348–368, 384–404, 418–438, and 448–468; these read FAFGCAIVASIISIIFGYDTG, QIEVLAGILNLCALVGSLTAG, YTIALSAVIFLVGSVLMGYGP, CIAGVGVGFALMIAPVYSAEI, GFLTSLPELCISLGILLGYVS, LGWRLMLGIAAFPSLILAFGI, ILIAAVGIHFFEHATGIEAVV, LLLATVGVGLTKAFFIIIATF, LLLTSTGGMVFALTSLAVSLT, IVSTYAFVAFFSIGLGPITWV, GASIGVAVNRIMNATVSMSFL, and GVFFVFAGIAVAAWWFFFFML.

Belongs to the major facilitator superfamily. Sugar transporter (TC 2.A.1.1) family.

The protein localises to the membrane. Its function is as follows. Plasma membrane sugar-proton symporter. In Arabidopsis thaliana (Mouse-ear cress), this protein is Probable polyol transporter 3 (PLT3).